Reading from the N-terminus, the 97-residue chain is Aspartyl/glutamyl-tRNA(Asn/Gln) amidotransferase subunit C (97 aa).

This sequence belongs to the GatC family. In terms of assembly, heterotrimer of A, B and C subunits.

The enzyme catalyses L-glutamyl-tRNA(Gln) + L-glutamine + ATP + H2O = L-glutaminyl-tRNA(Gln) + L-glutamate + ADP + phosphate + H(+). The catalysed reaction is L-aspartyl-tRNA(Asn) + L-glutamine + ATP + H2O = L-asparaginyl-tRNA(Asn) + L-glutamate + ADP + phosphate + 2 H(+). Allows the formation of correctly charged Asn-tRNA(Asn) or Gln-tRNA(Gln) through the transamidation of misacylated Asp-tRNA(Asn) or Glu-tRNA(Gln) in organisms which lack either or both of asparaginyl-tRNA or glutaminyl-tRNA synthetases. The reaction takes place in the presence of glutamine and ATP through an activated phospho-Asp-tRNA(Asn) or phospho-Glu-tRNA(Gln). The sequence is that of Aspartyl/glutamyl-tRNA(Asn/Gln) amidotransferase subunit C from Sulfolobus acidocaldarius (strain ATCC 33909 / DSM 639 / JCM 8929 / NBRC 15157 / NCIMB 11770).